The following is a 736-amino-acid chain: Elongation factor 2 (736 aa).

A tr-type G domain is found at 18–261; it reads EQIRNIGITA…MVVKHIPNPR (244 aa). Residues 27-34, 93-97, and 147-150 contribute to the GTP site; these read AHVDHGKT, DTPGH, and NKID. H602 bears the Diphthamide mark.

It belongs to the TRAFAC class translation factor GTPase superfamily. Classic translation factor GTPase family. EF-G/EF-2 subfamily.

It is found in the cytoplasm. In terms of biological role, catalyzes the GTP-dependent ribosomal translocation step during translation elongation. During this step, the ribosome changes from the pre-translocational (PRE) to the post-translocational (POST) state as the newly formed A-site-bound peptidyl-tRNA and P-site-bound deacylated tRNA move to the P and E sites, respectively. Catalyzes the coordinated movement of the two tRNA molecules, the mRNA and conformational changes in the ribosome. This is Elongation factor 2 from Desulfurococcus amylolyticus (strain DSM 18924 / JCM 16383 / VKM B-2413 / 1221n) (Desulfurococcus kamchatkensis).